A 351-amino-acid polypeptide reads, in one-letter code: Apolipoprotein L4 (351 aa).

A signal peptide spans 1-21 (MEGAALLKIFVVCIWVQQNHP).

It belongs to the apolipoprotein L family. Widely expressed; the highest levels are in spinal cord, placenta, adrenal gland; also detected in spleen, bone marrow, uterus, trachea, mammary gland and testis; levels are low in brain, heart and pancreas.

The protein resides in the secreted. Its function is as follows. May play a role in lipid exchange and transport throughout the body. May participate in reverse cholesterol transport from peripheral cells to the liver. In Homo sapiens (Human), this protein is Apolipoprotein L4 (APOL4).